Here is a 1116-residue protein sequence, read N- to C-terminus: DUB-associated factor 1 (1116 aa).

7 WD repeats span residues 21 to 62, 91 to 132, 160 to 200, 219 to 262, 266 to 305, 387 to 426, and 428 to 466; these read AHIL…NEPE, KNSD…DHDD, VHDG…EKMA, SMSP…EVIR, AHRT…DQTT, KKYG…FSVN, and GGFA…LLNT. The tract at residues 578-600 is disordered; sequence LDTGYNSESKKNNKDKKRKSTFK. Residue Ser-668 is modified to Phosphoserine. Thr-693 carries the phosphothreonine modification. The span at 747–776 shows a compositional bias: polar residues; that stretch reads ISSQDLPSNNTHNKLRSSENSRANSTSTLE. 2 disordered regions span residues 747 to 784 and 963 to 994; these read ISSQ…KKPE and FISA…PSTQ. The segment covering 967 to 987 has biased composition (low complexity); that stretch reads SDTTESSGNDSSDSSLGNGNE.

Interacts (via its WD repeats) with ubiquitin.

The protein localises to the cytoplasm. Functionally, ubiquitin-binding protein involved in the resistance to phenanthroline, sanguinarine, nordihydroguaiaretic acid (NDGA), isopropyl (N-3-chloro-phenyl)-carbamate (IPCPC) and guanosine 5'-O-(2-thiodiphosphate). This is DUB-associated factor 1 from Saccharomyces cerevisiae (strain ATCC 204508 / S288c) (Baker's yeast).